We begin with the raw amino-acid sequence, 293 residues long: 4-hydroxybenzoate octaprenyltransferase (293 aa).

8 consecutive transmembrane segments (helical) span residues 19 to 39 (PIGI…ASNG), 43 to 63 (WLIL…GCVV), 95 to 115 (LLAA…NALV), 135 to 155 (FFAI…PMSY), 158 to 178 (LWGE…FWAI), 209 to 229 (LTAI…VGAL), 231 to 251 (DFSG…VYHL), and 266 to 286 (FLHN…HFLL).

This sequence belongs to the UbiA prenyltransferase family. The cofactor is Mg(2+).

Its subcellular location is the cell inner membrane. The catalysed reaction is all-trans-octaprenyl diphosphate + 4-hydroxybenzoate = 4-hydroxy-3-(all-trans-octaprenyl)benzoate + diphosphate. It functions in the pathway cofactor biosynthesis; ubiquinone biosynthesis. Catalyzes the prenylation of para-hydroxybenzoate (PHB) with an all-trans polyprenyl group. Mediates the second step in the final reaction sequence of ubiquinone-8 (UQ-8) biosynthesis, which is the condensation of the polyisoprenoid side chain with PHB, generating the first membrane-bound Q intermediate 3-octaprenyl-4-hydroxybenzoate. The sequence is that of 4-hydroxybenzoate octaprenyltransferase from Thiobacillus denitrificans (strain ATCC 25259 / T1).